A 119-amino-acid polypeptide reads, in one-letter code: Holo-[acyl-carrier-protein] synthase (119 aa).

Positions 8 and 58 each coordinate Mg(2+).

The protein belongs to the P-Pant transferase superfamily. AcpS family. It depends on Mg(2+) as a cofactor.

The protein resides in the cytoplasm. It catalyses the reaction apo-[ACP] + CoA = holo-[ACP] + adenosine 3',5'-bisphosphate + H(+). In terms of biological role, transfers the 4'-phosphopantetheine moiety from coenzyme A to a Ser of acyl-carrier-protein. This Streptococcus mutans serotype c (strain ATCC 700610 / UA159) protein is Holo-[acyl-carrier-protein] synthase.